The sequence spans 135 residues: C-type Lectin CRL (135 aa).

Intrachain disulfides connect cysteine 3-cysteine 14, cysteine 31-cysteine 131, cysteine 38-cysteine 133, and cysteine 106-cysteine 123. One can recognise a C-type lectin domain in the interval 10 to 132; the sequence is MNGLCYKIFN…CESKDAFLCQ (123 aa). Positions 96, 98, 104, 119, and 120 each coordinate Ca(2+). Positions 96–98 match the Galactose-binding motif; the sequence is QPD.

This sequence belongs to the true venom lectin family. As to quaternary structure, homodimer; disulfide-linked. Expressed by the venom gland.

The protein resides in the secreted. In terms of biological role, beta-galactoside and N-acetylgalactosamine (GalNAc) specific C-type lectin. This Crotalus ruber ruber (Red diamond rattlesnake) protein is C-type Lectin CRL.